A 682-amino-acid chain; its full sequence is Histone deacetylase 18 (682 aa).

Residues 59-382 (KVGLVYDETM…SLACVQVLLE (324 aa)) are histone deacetylase. The Proton donor/acceptor role is filled by His191. Zn(2+) contacts are provided by Asp231, His233, and Asp324. The stretch at 430–608 (SAERNSADAL…DKELQEDRSR (179 aa)) forms a coiled coil.

Belongs to the histone deacetylase family. HD type 2 subfamily. The cofactor is Zn(2+). Expressed in roots, stems, young rosette leaves, flowers and siliques.

Its subcellular location is the nucleus. The protein resides in the cytoplasm. The enzyme catalyses N(6)-acetyl-L-lysyl-[histone] + H2O = L-lysyl-[histone] + acetate. Responsible for the deacetylation of lysine residues on the N-terminal part of the core histones (H2A, H2B, H3 and H4). Histone deacetylation gives a tag for epigenetic repression and plays an important role in transcriptional regulation, cell cycle progression and developmental events. Histone deacetylases act via the formation of large multiprotein complexes. Required for appropriate cellular patterning in the root epidermis. Involved in the differentiation of hair and non-hair cells in the root epidermis. Is not directly involved in the regulation of the expression of pattern genes. Regulates the transcription of certain kinase genes, which are components of a positional information relay system, by changing their histone acetylation status. This chain is Histone deacetylase 18, found in Arabidopsis thaliana (Mouse-ear cress).